A 383-amino-acid chain; its full sequence is Probable purine permease 16 (383 aa).

The next 10 membrane-spanning stretches (helical) occupy residues 30 to 50 (ISVF…MLLL), 72 to 92 (WTQA…FFIL), 113 to 133 (VLSL…LYAL), 138 to 158 (VGWG…SAFI), 166 to 186 (WIII…PAFA), 203 to 223 (LILI…QLGF), 247 to 267 (ICVS…SGEF), 297 to 317 (VWAV…ADVV), 322 to 342 (SPVV…EFGW), and 346 to 363 (GALL…YSLH).

Belongs to the purine permeases (TC 2.A.7.14) family.

It localises to the membrane. This chain is Probable purine permease 16 (PUP16), found in Arabidopsis thaliana (Mouse-ear cress).